The primary structure comprises 790 residues: Cadherin-6 (790 aa).

Residues 1–18 (MRTYRYFLLLFWVGQPYP) form the signal peptide. The propeptide occupies 19–53 (TFSNPLSKRTSGFPAKRKALELSANSRNELSRSKR). Cadherin domains lie at 54–159 (SWMW…EPIF), 160–268 (TKDV…PPRF), 269–383 (PQST…PPVF), 384–486 (SKLA…DNAP), and 487–608 (EFAE…LIHP). At 54–615 (SWMWNQFFLL…IHPTGLSTGA (562 aa)) the chain is on the extracellular side. N-linked (GlcNAc...) asparagine glycosylation occurs at Asn255. Residues 260-291 (DVNDNPPRFPQSTYQFKTPESSPPGTPIGRIK) are disordered. The span at 269–279 (PQSTYQFKTPE) shows a compositional bias: polar residues. N-linked (GlcNAc...) asparagine glycosylation is found at Asn399, Asn437, Asn455, and Asn536. A helical membrane pass occupies residues 616–636 (LVAILLCIVILLVTVVLFAAL). Residues 637-790 (RRQRKKEPLI…YGGMDSDKDS (154 aa)) lie on the Cytoplasmic side of the membrane. A phosphoserine mark is found at Ser786 and Ser790.

The protein resides in the cell membrane. Its function is as follows. Cadherins are calcium-dependent cell adhesion proteins. They preferentially interact with themselves in a homophilic manner in connecting cells; cadherins may thus contribute to the sorting of heterogeneous cell types. The polypeptide is Cadherin-6 (Cdh6) (Mus musculus (Mouse)).